Consider the following 340-residue polypeptide: Ketol-acid reductoisomerase (NADP(+)) (340 aa).

Residues 2 to 181 (AKVFYNGDIN…GSARAGVIET (180 aa)) enclose the KARI N-terminal Rossmann domain. NADP(+) is bound by residues 25–28 (YGSQ), R48, S52, and 82–85 (DEHQ). The active site involves H107. Residue G133 participates in NADP(+) binding. Residues 182–327 (TFQEETETDL…RELREMMPFV (146 aa)) form the KARI C-terminal knotted domain. Mg(2+) is bound by residues D190, E194, E226, and E230. A substrate-binding site is contributed by S251.

It belongs to the ketol-acid reductoisomerase family. The cofactor is Mg(2+).

The catalysed reaction is (2R)-2,3-dihydroxy-3-methylbutanoate + NADP(+) = (2S)-2-acetolactate + NADPH + H(+). It carries out the reaction (2R,3R)-2,3-dihydroxy-3-methylpentanoate + NADP(+) = (S)-2-ethyl-2-hydroxy-3-oxobutanoate + NADPH + H(+). It functions in the pathway amino-acid biosynthesis; L-isoleucine biosynthesis; L-isoleucine from 2-oxobutanoate: step 2/4. Its pathway is amino-acid biosynthesis; L-valine biosynthesis; L-valine from pyruvate: step 2/4. Its function is as follows. Involved in the biosynthesis of branched-chain amino acids (BCAA). Catalyzes an alkyl-migration followed by a ketol-acid reduction of (S)-2-acetolactate (S2AL) to yield (R)-2,3-dihydroxy-isovalerate. In the isomerase reaction, S2AL is rearranged via a Mg-dependent methyl migration to produce 3-hydroxy-3-methyl-2-ketobutyrate (HMKB). In the reductase reaction, this 2-ketoacid undergoes a metal-dependent reduction by NADPH to yield (R)-2,3-dihydroxy-isovalerate. The protein is Ketol-acid reductoisomerase (NADP(+)) of Halalkalibacterium halodurans (strain ATCC BAA-125 / DSM 18197 / FERM 7344 / JCM 9153 / C-125) (Bacillus halodurans).